A 160-amino-acid chain; its full sequence is 3-hydroxyacyl-[acyl-carrier-protein] dehydratase FabZ (160 aa).

His-63 is a catalytic residue.

The protein belongs to the thioester dehydratase family. FabZ subfamily.

Its subcellular location is the cytoplasm. It carries out the reaction a (3R)-hydroxyacyl-[ACP] = a (2E)-enoyl-[ACP] + H2O. Functionally, involved in unsaturated fatty acids biosynthesis. Catalyzes the dehydration of short chain beta-hydroxyacyl-ACPs and long chain saturated and unsaturated beta-hydroxyacyl-ACPs. The chain is 3-hydroxyacyl-[acyl-carrier-protein] dehydratase FabZ from Xylella fastidiosa (strain M12).